The primary structure comprises 1197 residues: PAN2-PAN3 deadenylation complex catalytic subunit PAN2 (1197 aa).

WD repeat units lie at residues 153-193 (DEAE…QKYT), 195-231 (EVPG…VEHE), 244-280 (VHGN…ATTP), and 328-367 (TVGP…TFNT). The tract at residues 368–485 (YSRETDFALP…IGREEEPHLY (118 aa)) is linker. Positions 486 to 919 (MVAKKYRKVT…VPAILYYARR (434 aa)) constitute a USP domain. Residues 970 to 1142 (VGLDAEFVTL…EDARTALQLY (173 aa)) form the Exonuclease domain. The a divalent metal cation site is built by D973, E975, D1082, and D1134. A disordered region spans residues 1176-1197 (VPEPDSQSSPKHGAVFPPVLAL).

Belongs to the peptidase C19 family. PAN2 subfamily. In terms of assembly, forms a heterotrimer with an asymmetric homodimer of the regulatory subunit PAN3 to form the poly(A)-nuclease (PAN) deadenylation complex. A divalent metal cation is required as a cofactor.

It localises to the cytoplasm. Its subcellular location is the P-body. It is found in the nucleus. The enzyme catalyses Exonucleolytic cleavage of poly(A) to 5'-AMP.. With respect to regulation, positively regulated by the regulatory subunit PAN3. In terms of biological role, catalytic subunit of the poly(A)-nuclease (PAN) deadenylation complex, one of two cytoplasmic mRNA deadenylases involved in general and miRNA-mediated mRNA turnover. PAN specifically shortens poly(A) tails of RNA and the activity is stimulated by poly(A)-binding protein (PABP). PAN deadenylation is followed by rapid degradation of the shortened mRNA tails by the CCR4-NOT complex. Deadenylated mRNAs are then degraded by two alternative mechanisms, namely exosome-mediated 3'-5' exonucleolytic degradation, or deadenylation-dependent mRNA decaping and subsequent 5'-3' exonucleolytic degradation by XRN1. The sequence is that of PAN2-PAN3 deadenylation complex catalytic subunit PAN2 from Gallus gallus (Chicken).